Reading from the N-terminus, the 134-residue chain is Replication enhancer protein (134 aa).

The protein belongs to the geminiviridae replication enhancer protein family. As to quaternary structure, homooligomer. Interacts with the replication-associated protein (REP). Interacts with host proliferating cell nuclear antigen (PCNA). Interacts with host retinoblastoma-related protein 1 (RBR1), and may thereby deregulate the host cell cycle. Oligomerization and interaction with PCNA are necessary for optimal replication enhancement.

Increases viral DNA accumulation. Enhances infectivity and symptom expression. In Tomato pseudo-curly top virus (TPCTV), this protein is Replication enhancer protein.